We begin with the raw amino-acid sequence, 223 residues long: MQWAVGRRWLWVALFLAAVAVLTQIVWLWLGTQNFVFQREEIAQLARQYAGLDHELAFSKLIVELRRLHPVHVLPDEELQWVFVNAGGWMGAMCLLHASLSEYVLLFGTALGSPRHSGRYWAEISDTIISGTFHQWREGTTKSEVFYPGETVVHGPGEATAVEWGPNTWMVEYGRGVIPSTLGFALADTVFSTQDFLTLFYTLRVYARALQLELTTYLFGQDP.

Residues 1–9 (MQWAVGRRW) are Lumenal-facing. Positions 2–8 (QWAVGRR) are targeting to endoplasmic reticulum-associated lipid droplets. A helical membrane pass occupies residues 10–30 (LWVALFLAAVAVLTQIVWLWL). At 31 to 223 (GTQNFVFQRE…LTTYLFGQDP (193 aa)) the chain is on the cytoplasmic side. Residues 99–106 (SLSEYVLL) form an important for ligand-binding region. Residues 177 to 223 (VIPSTLGFALADTVFSTQDFLTLFYTLRVYARALQLELTTYLFGQDP) form a C-terminal hydrophobic region region.

This sequence belongs to the ERG2 family. Homotrimer. Forms a ternary complex with ANK2 and ITPR3. The complex is disrupted by agonists. Interacts with KCNA4. Interacts with KCNA2; cocaine consumption leads to increased interaction. Interacts with RNF112 in an oxidative stress-regulated manner. As to expression, ubiquitously expressed with higher expression in liver, kidney and steroid-producing tissues such as placenta, ovary and adrenal gland.

The protein resides in the nucleus inner membrane. It is found in the nucleus outer membrane. It localises to the nucleus envelope. Its subcellular location is the cytoplasmic vesicle. The protein localises to the endoplasmic reticulum membrane. The protein resides in the membrane. It is found in the lipid droplet. It localises to the cell junction. Its subcellular location is the cell membrane. The protein localises to the cell projection. The protein resides in the growth cone. It is found in the postsynaptic density membrane. Functions in lipid transport from the endoplasmic reticulum and is involved in a wide array of cellular functions probably through regulation of the biogenesis of lipid microdomains at the plasma membrane. Involved in the regulation of different receptors it plays a role in BDNF signaling and EGF signaling. Also regulates ion channels like the potassium channel and could modulate neurotransmitter release. Plays a role in calcium signaling through modulation together with ANK2 of the ITP3R-dependent calcium efflux at the endoplasmic reticulum. Plays a role in several other cell functions including proliferation, survival and death. Originally identified for its ability to bind various psychoactive drugs it is involved in learning processes, memory and mood alteration. Necessary for proper mitochondrial axonal transport in motor neurons, in particular the retrograde movement of mitochondria. Plays a role in protecting cells against oxidative stress-induced cell death via its interaction with RNF112. The polypeptide is Sigma non-opioid intracellular receptor 1 (SIGMAR1) (Cavia porcellus (Guinea pig)).